The primary structure comprises 255 residues: Lactose phosphotransferase system repressor (255 aa).

Residues 3 to 58 (KKRRLEKILDMLKIDGTITIKEIIDELDISDMTARRDLDALEADGLLTRTHGGAQL) form the HTH deoR-type domain. The segment at residues 20-39 (ITIKEIIDELDISDMTARRD) is a DNA-binding region (H-T-H motif).

Functionally, repressor of the lactose catabolism operon. Galactose-6-phosphate is the inducer. The protein is Lactose phosphotransferase system repressor (lacR) of Lactococcus lactis subsp. lactis (Streptococcus lactis).